The following is a 1495-amino-acid chain: Ras GTPase-activating-like protein IQG1 (1495 aa).

In terms of domain architecture, Calponin-homology (CH) spans 108-221 (LCRVSEVKIW…ILISMINKKW (114 aa)). Phosphothreonine is present on threonine 264. The residue at position 268 (serine 268) is a Phosphoserine. Residue threonine 299 is modified to Phosphothreonine. 7 IQ domains span residues 447-467 (EQDILRFQACLRGNKFRVLSS), 538-567 (SHYPLTKLQSYMRASYVRKKVMSLNTKLND), 568-597 (ERESIMKFSAIIRGNVVRCSEDAILSAVHD), 599-628 (HKENISKLQSLIRGIFTRSCLASIIYSLGK), 629-658 (ENCNIIQLSACIRGNAVRHKVQSLFAPENN), 687-716 (EYNNLALFQAFSRGALVRESLDQKSSFYKR), and 717-746 (NVRSVIMIQSWIRKSLQRSAYLELLDCPNP). Residues 759–798 (NGTATIEEVQNQLESCQASLDSENMKKERLLKSIRQQLNI) adopt a coiled-coil conformation. Residues 876-1100 (SYFTRFVCEM…PHIKDVLYNV (225 aa)) enclose the Ras-GAP domain.

In terms of assembly, interacts with AFR1. Interacts with AKR1. Interacts with activated CDC42. Interacts with calmodulin CMD1. Interacts with myosin MYO1 and its light chain MLC1. Interacts with BUD4. Interacts with INN1. Interacts with SEC3. Interacts with TEM1.

It is found in the bud neck. Its function is as follows. Required for the assembly and the contraction of the actomyosin ring at the bud neck during cytokinesis. Seems to be involved in additional tasks during cell division like axial bud-site selection and targeted secretion by recruiting the spatial landmark BUD4, the septin CDC12 and the secretion landmark SEC3 to the bud neck. May be regulated by calcium ions. The sequence is that of Ras GTPase-activating-like protein IQG1 (IQG1) from Saccharomyces cerevisiae (strain ATCC 204508 / S288c) (Baker's yeast).